A 433-amino-acid chain; its full sequence is Histone acetyltransferase type B subunit 2 (433 aa).

5 WD repeats span residues 131–171 (EHPG…LDPT), 184–224 (GHEA…ADSR), 234–274 (HHTQ…TNKA), 281–321 (GHLD…EKVH), and 325–365 (GHND…EEQL). The interval 367 to 371 (DDQDD) is interaction with the histone H4 N-terminus. One copy of the WD 6 repeat lies at 382-422 (GHTNHLADFSWNPNEPWLVASAAEDNLLQIWKVAESIVGKD).

The protein belongs to the WD repeat RBAP46/RBAP48/MSI1 family. Component of the HAT-B complex composed of at least HAT1 and HAT2. The HAT-B complex binds to histone H4 tail.

The protein localises to the cytoplasm. Its subcellular location is the nucleus. Its function is as follows. Regulatory subunit of the histone acetylase B (HAT-B) complex. The complex acetylates 'Lys-12' of histone H4 which is required for telomeric silencing. The protein is Histone acetyltransferase type B subunit 2 (HAT2) of Gibberella zeae (strain ATCC MYA-4620 / CBS 123657 / FGSC 9075 / NRRL 31084 / PH-1) (Wheat head blight fungus).